We begin with the raw amino-acid sequence, 726 residues long: Catalase-peroxidase (726 aa).

A disordered region spans residues 1-33 (MSTTDDTHNTLSTGKCPFHQGGHDRSAGAGTAS). The tryptophyl-tyrosyl-methioninium (Trp-Tyr) (with M-252) cross-link spans 105-226 (WHGAGTYRSI…LGATEMGLIY (122 aa)). His-106 functions as the Proton acceptor in the catalytic mechanism. Positions 226-252 (YVNPEGPDHSGEPLSAAAAIRATFGNM) form a cross-link, tryptophyl-tyrosyl-methioninium (Tyr-Met) (with W-105). His-267 contacts heme b.

It belongs to the peroxidase family. Peroxidase/catalase subfamily. Homodimer or homotetramer. Heme b is required as a cofactor. Formation of the three residue Trp-Tyr-Met cross-link is important for the catalase, but not the peroxidase activity of the enzyme.

The enzyme catalyses H2O2 + AH2 = A + 2 H2O. The catalysed reaction is 2 H2O2 = O2 + 2 H2O. Functionally, bifunctional enzyme with both catalase and broad-spectrum peroxidase activity. The chain is Catalase-peroxidase from Salmonella paratyphi B (strain ATCC BAA-1250 / SPB7).